The sequence spans 163 residues: Phosphopantetheine adenylyltransferase (163 aa).

T10 contacts substrate. Residues 10–11 and H18 contribute to the ATP site; that span reads TF. Substrate-binding residues include K42, L75, and R89. ATP-binding positions include 90–92, E100, and 125–131; these read GVR and YTYVASS.

Belongs to the bacterial CoaD family. Homohexamer. The cofactor is Mg(2+).

The protein localises to the cytoplasm. The catalysed reaction is (R)-4'-phosphopantetheine + ATP + H(+) = 3'-dephospho-CoA + diphosphate. The protein operates within cofactor biosynthesis; coenzyme A biosynthesis; CoA from (R)-pantothenate: step 4/5. In terms of biological role, reversibly transfers an adenylyl group from ATP to 4'-phosphopantetheine, yielding dephospho-CoA (dPCoA) and pyrophosphate. In Pelodictyon phaeoclathratiforme (strain DSM 5477 / BU-1), this protein is Phosphopantetheine adenylyltransferase.